The sequence spans 125 residues: Large ribosomal subunit protein bL12 (125 aa).

Belongs to the bacterial ribosomal protein bL12 family. In terms of assembly, homodimer. Part of the ribosomal stalk of the 50S ribosomal subunit. Forms a multimeric L10(L12)X complex, where L10 forms an elongated spine to which 2 to 4 L12 dimers bind in a sequential fashion. Binds GTP-bound translation factors.

Forms part of the ribosomal stalk which helps the ribosome interact with GTP-bound translation factors. Is thus essential for accurate translation. The protein is Large ribosomal subunit protein bL12 of Campylobacter jejuni subsp. jejuni serotype O:6 (strain 81116 / NCTC 11828).